The following is a 388-amino-acid chain: Putative pyridoxal phosphate-dependent aminotransferase EpsN (388 aa).

Position 190 is an N6-(pyridoxal phosphate)lysine (Lys190).

This sequence belongs to the DegT/DnrJ/EryC1 family. Pyridoxal 5'-phosphate serves as cofactor.

Its function is as follows. May be involved in the production of the exopolysaccharide (EPS) component of the extracellular matrix during biofilm formation. EPS is responsible for the adhesion of chains of cells into bundles. This is Putative pyridoxal phosphate-dependent aminotransferase EpsN (epsN) from Bacillus subtilis (strain 168).